The following is a 457-amino-acid chain: Probable ECA polymerase (457 aa).

Transmembrane regions (helical) follow at residues 3-23 (LLQFAGLLLVWLVCGGFILTL), 41-61 (MLFLLTFFFGFPLTCILVFGF), 65-85 (VVPAEYLLQALLSAGCFYAIY), 118-138 (IMALVALITVSVFFLHNGFLL), 154-174 (GVALKRFFYFFIPAMLVVYFL), 181-201 (WLLFLVGTVAFGLLTYAIVGG), 206-226 (IIIAFALFLFIGIIRGWITLW), 227-247 (MLALAGVGAIVAMFWLALKRY), 340-360 (LVVMGGALFIMLGAVMVGLII), 377-397 (YKAAILQSFCFGAVFNMIVLA), and 408-428 (VVFFCVIFAACVLVAKLLYWL).

This sequence belongs to the WzyE family. As to quaternary structure, probably part of a complex composed of WzxE, WzyE and WzzE.

Its subcellular location is the cell inner membrane. It functions in the pathway bacterial outer membrane biogenesis; enterobacterial common antigen biosynthesis. Its function is as follows. Probably involved in the polymerization of enterobacterial common antigen (ECA) trisaccharide repeat units. This chain is Probable ECA polymerase, found in Erwinia tasmaniensis (strain DSM 17950 / CFBP 7177 / CIP 109463 / NCPPB 4357 / Et1/99).